Consider the following 480-residue polypeptide: MYQISLKATKSAAEPTSSTDASHDDRQVERDSYDTAMLRFISDMELSSMYAEKTSPYPILMPRSFLEDLKNFQDLLFVAVSNILDRWWEDREADFPRRMPLEPHEESVLKHYNERPLHWRPDMLLPAAGDPNTNLPFKICEINARSPFNSMIKSICMFQAAAASKTALPDGLELASTADSLVDSLVSLFNPDLPLHVIWHEGITDPIDAFSSFYKKRTGKIPRVIRATDLRLAPDSSSPTGRILCCVASAASADHSNGQAIVSETGEPLERIYQVGLQMSHRDYSELSSEVLQQLAVDGICDLRNIFLVSDKRMLGVIWQELDSLVHKHHVLTAEQAEILRQGIVHTILPGSEDMERLLRQTREGSVSKDSYLLKPARGHRGMGILLGKDLGQEEFEGLLEELADPLLPADRRYVVQPFIEQALFGLRLYDDSEPQQCQMTGTYHAIGGCFAGLGVWRADSERICSRFHGAFSIPAIVPR.

The segment at 1-30 (MYQISLKATKSAAEPTSSTDASHDDRQVER) is disordered. Over residues 21–30 (ASHDDRQVER) the composition is skewed to basic and acidic residues.

The catalysed reaction is NK13650 D + L-aspartate + ATP = NK13650 C + AMP + diphosphate + H(+). The enzyme catalyses NK13650 B + L-aspartate + ATP = NK13650 A + AMP + diphosphate + H(+). It functions in the pathway secondary metabolite biosynthesis. In terms of biological role, ATP-grasp enzyme; part of the ank cluster that mediates the biosynthesis of NK13650 C, a highly modified cyclo-arginine-tyrosine dipeptide. AnkG catalyzes the last step of the pathway via amidation NK13650 D with L-Asp to produce NK13650 C. AnkG also amidates NK13650 B into NK13650 A. Within the pathway, the cyclodipeptide synthase ankA acts as the scaffold-generating enzyme and is responsible for formation of the cyclo-Arg-Tyr diketopiperazine (cRY) from L-Arg and L-Tyr. The ankA product cRY is desaturated by the cytochrome P450 monooxygenase ankB to yield a dehydro-cyclodipeptide intermediate. The FAD-dependent monooxygenase ankC then installs the m-OH, ankD catalyzes the attachment of L-homoserine, and ankE ligates citrate to the ankD product to yield NK13650 B. The O-methyltransferase ankF is responsible for methylation of the C-17 phenol group of NK13650 B to produce NK13650 D. Amidation of NK13650 D with L-Asp by ankG then leads to the production of NK13650 C, whereas amidation of NK13650 B produces NK13650 A. The protein is ATP-grasp enzyme ankG of Aspergillus thermomutatus (Neosartorya pseudofischeri).